The primary structure comprises 103 residues: UPF0145 protein Dred_2155 (103 aa).

It belongs to the UPF0145 family.

The polypeptide is UPF0145 protein Dred_2155 (Desulforamulus reducens (strain ATCC BAA-1160 / DSM 100696 / MI-1) (Desulfotomaculum reducens)).